The chain runs to 310 residues: Olfactory receptor 5T7 (310 aa).

The Extracellular portion of the chain corresponds to 1-23 (MENITEVTEFILMGFTDNADLEI). N-linked (GlcNAc...) asparagine glycosylation is present at Asn-3. A helical transmembrane segment spans residues 24 to 44 (LSFFLFLAIYLFTLMGNLGLI). The Cytoplasmic portion of the chain corresponds to 45 to 52 (TLVIGDSR). A helical membrane pass occupies residues 53–73 (LHNPMYYFLSVLSSVDACYST). The Extracellular portion of the chain corresponds to 74–97 (VITPQMVVDFVSEKKVISFIGCAT). Cys-95 and Cys-187 are joined by a disulfide. A helical membrane pass occupies residues 98–118 (QMFLAVTFGTTECFLLAAMAY). At 119 to 131 (DRYVAIHNPLMYV) the chain is on the cytoplasmic side. A helical membrane pass occupies residues 132 to 152 (VSMSPRVYVPLIIASYAGGIL). Residues 153-194 (HAVIHTVATFRLSFCGSNKISHIFCDIPPLLAISCSDTHFNQ) are Extracellular-facing. The helical transmembrane segment at 195–215 (LLLFYCAGFIEVVTILIVLLS) threads the bilayer. The Cytoplasmic portion of the chain corresponds to 216 to 235 (YGFILSVILKTRSTEGKRKV). Residues 236–256 (FSTCGSHLMAVSTFHGTVLFM) traverse the membrane as a helical segment. At 257-269 (YVRPSDSYALEHD) the chain is on the extracellular side. Residues 270 to 290 (MMVSIFYSIVIPMLNPLIYSL) traverse the membrane as a helical segment. At 291-310 (RNKDVKEAIKKVFGKRILCG) the chain is on the cytoplasmic side.

Belongs to the G-protein coupled receptor 1 family.

The protein localises to the cell membrane. In terms of biological role, potential odorant receptor. The chain is Olfactory receptor 5T7 from Mus musculus (Mouse).